We begin with the raw amino-acid sequence, 435 residues long: Salicylate hydroxylase (435 aa).

Residue 12–41 (RVAIVGGGISGLALALSLCKHSHLNVQLFE) coordinates FAD.

Requires FAD as cofactor.

The catalysed reaction is salicylate + NADH + O2 + 2 H(+) = catechol + CO2 + NAD(+) + H2O. It functions in the pathway aromatic compound metabolism; naphthalene degradation. The chain is Salicylate hydroxylase (nahG) from Pseudomonas putida (Arthrobacter siderocapsulatus).